The primary structure comprises 239 residues: Probable transcriptional regulatory protein BCG9842_B4761 (239 aa).

Belongs to the TACO1 family. YeeN subfamily.

The protein resides in the cytoplasm. The chain is Probable transcriptional regulatory protein BCG9842_B4761 from Bacillus cereus (strain G9842).